Here is a 437-residue protein sequence, read N- to C-terminus: tRNA(Ile)-lysidine synthase (437 aa).

ATP is bound at residue 22-27; the sequence is SGGLDS.

The protein belongs to the tRNA(Ile)-lysidine synthase family.

It localises to the cytoplasm. The enzyme catalyses cytidine(34) in tRNA(Ile2) + L-lysine + ATP = lysidine(34) in tRNA(Ile2) + AMP + diphosphate + H(+). Ligates lysine onto the cytidine present at position 34 of the AUA codon-specific tRNA(Ile) that contains the anticodon CAU, in an ATP-dependent manner. Cytidine is converted to lysidine, thus changing the amino acid specificity of the tRNA from methionine to isoleucine. The polypeptide is tRNA(Ile)-lysidine synthase (Xylella fastidiosa (strain 9a5c)).